We begin with the raw amino-acid sequence, 154 residues long: uncharacterized protein (154 aa).

A Phosphoserine modification is found at Ser-47.

This sequence to yeast YPL229w.

This is an uncharacterized protein from Saccharomyces cerevisiae (strain ATCC 204508 / S288c) (Baker's yeast).